Reading from the N-terminus, the 37-residue chain is Large ribosomal subunit protein bL36c (37 aa).

It belongs to the bacterial ribosomal protein bL36 family.

The protein localises to the plastid. Its subcellular location is the chloroplast. The sequence is that of Large ribosomal subunit protein bL36c from Chloranthus spicatus (Chulantree).